The following is a 220-amino-acid chain: Redox-sensing transcriptional repressor Rex (220 aa).

A DNA-binding region (H-T-H motif) is located at residues 25–64 (WYLSNVKLLKQKGERYVSSTQISKEINIDASQIAKDLSYV). Position 99–104 (99–104 (GVGSLG)) interacts with NAD(+).

Belongs to the transcriptional regulatory Rex family. Homodimer.

The protein localises to the cytoplasm. Modulates transcription in response to changes in cellular NADH/NAD(+) redox state. This chain is Redox-sensing transcriptional repressor Rex, found in Bacteroides fragilis (strain ATCC 25285 / DSM 2151 / CCUG 4856 / JCM 11019 / LMG 10263 / NCTC 9343 / Onslow / VPI 2553 / EN-2).